Reading from the N-terminus, the 242-residue chain is Uridylate kinase (242 aa).

15–18 serves as a coordination point for ATP; it reads KLSG. G57 provides a ligand contact to UMP. ATP is bound by residues G58 and R62. UMP is bound by residues D78 and 139 to 146; that span reads TGNPFFTT. ATP-binding residues include T166, Y172, and D175.

The protein belongs to the UMP kinase family. As to quaternary structure, homohexamer.

The protein resides in the cytoplasm. The catalysed reaction is UMP + ATP = UDP + ADP. It participates in pyrimidine metabolism; CTP biosynthesis via de novo pathway; UDP from UMP (UMPK route): step 1/1. Inhibited by UTP. Catalyzes the reversible phosphorylation of UMP to UDP. This is Uridylate kinase from Acinetobacter baylyi (strain ATCC 33305 / BD413 / ADP1).